Here is a 441-residue protein sequence, read N- to C-terminus: Ribosomal protein uS12 methylthiotransferase RimO (441 aa).

In terms of domain architecture, MTTase N-terminal spans proline 8 to proline 118. Residues cysteine 17, cysteine 53, cysteine 82, cysteine 150, cysteine 154, and cysteine 157 each contribute to the [4Fe-4S] cluster site. Residues leucine 136–glutamate 373 enclose the Radical SAM core domain. Residues glutamine 376–valine 441 form the TRAM domain.

It belongs to the methylthiotransferase family. RimO subfamily. Requires [4Fe-4S] cluster as cofactor.

It localises to the cytoplasm. The enzyme catalyses L-aspartate(89)-[ribosomal protein uS12]-hydrogen + (sulfur carrier)-SH + AH2 + 2 S-adenosyl-L-methionine = 3-methylsulfanyl-L-aspartate(89)-[ribosomal protein uS12]-hydrogen + (sulfur carrier)-H + 5'-deoxyadenosine + L-methionine + A + S-adenosyl-L-homocysteine + 2 H(+). Functionally, catalyzes the methylthiolation of an aspartic acid residue of ribosomal protein uS12. The protein is Ribosomal protein uS12 methylthiotransferase RimO of Shigella boydii serotype 18 (strain CDC 3083-94 / BS512).